A 301-amino-acid chain; its full sequence is MASRYVAVGMILSQTVVGVLGSFSVLLHYLSFYCTGCRLRSTDLIVKHLIVANFLALRCKGVPQTMAAFGVRYFLNALGCKLVFYLHRVGRGVSIGTTCLLSVFQVITVSSRKSRWAKLKEKAPKHVGFSVLLCWIVCMLVNIIFPMYVTGKWNYTNITVNEDLGYCSGGGNNKIAQTLRAMLLSFPDVLCLGLMLWVSSSMVCILHRHKQRVQHIDRSNLSPRASPENRATQSILILVSTFVSSYTLSCLFQVCMALLDNPNSLLVNTSALMSVCFPTLSPFVLMSCDPSVYRFCFAWKR.

Residues 1 to 5 (MASRY) lie on the Extracellular side of the membrane. A helical transmembrane segment spans residues 6–26 (VAVGMILSQTVVGVLGSFSVL). Residues 27-48 (LHYLSFYCTGCRLRSTDLIVKH) are Cytoplasmic-facing. A helical transmembrane segment spans residues 49–69 (LIVANFLALRCKGVPQTMAAF). At 70-88 (GVRYFLNALGCKLVFYLHR) the chain is on the extracellular side. A helical membrane pass occupies residues 89-109 (VGRGVSIGTTCLLSVFQVITV). At 110–126 (SSRKSRWAKLKEKAPKH) the chain is on the cytoplasmic side. Residues 127–147 (VGFSVLLCWIVCMLVNIIFPM) traverse the membrane as a helical segment. The Extracellular segment spans residues 148–185 (YVTGKWNYTNITVNEDLGYCSGGGNNKIAQTLRAMLLS). N-linked (GlcNAc...) asparagine glycans are attached at residues Asn-154 and Asn-157. The helical transmembrane segment at 186 to 206 (FPDVLCLGLMLWVSSSMVCIL) threads the bilayer. Residues 207–234 (HRHKQRVQHIDRSNLSPRASPENRATQS) lie on the Cytoplasmic side of the membrane. The helical transmembrane segment at 235 to 255 (ILILVSTFVSSYTLSCLFQVC) threads the bilayer. Residues 256–264 (MALLDNPNS) lie on the Extracellular side of the membrane. The chain crosses the membrane as a helical span at residues 265–285 (LLVNTSALMSVCFPTLSPFVL). The Cytoplasmic segment spans residues 286-301 (MSCDPSVYRFCFAWKR).

Belongs to the G-protein coupled receptor 1 family.

The protein localises to the cell membrane. Its function is as follows. Putative pheromone receptor. The polypeptide is Vomeronasal type-1 receptor 4 (VN1R4) (Homo sapiens (Human)).